A 555-amino-acid chain; its full sequence is Putative ankyrin repeat protein L283 (555 aa).

ANK repeat units lie at residues 364 to 389, 390 to 420, 422 to 447, and 455 to 488; these read TKVN…EDDI, VFKK…DINE, IKLA…KVRC, and GYLE…EGGK.

In Acanthamoeba polyphaga mimivirus (APMV), this protein is Putative ankyrin repeat protein L283.